Reading from the N-terminus, the 523-residue chain is Amino acid transporter protein 6 (523 aa).

The Cytoplasmic segment spans residues 1-19; that stretch reads MLNVFGVSASMPDDSRSQK. A helical transmembrane segment spans residues 20–40; that stretch reads MGLLGAISYIVGNIVGSGIFI. Residues 41–51 lie on the Extracellular side of the membrane; the sequence is TPTSIIENVNS. Residues 52–72 traverse the membrane as a helical segment; the sequence is VGLSLAIWILAAFISMLGSFC. Residues 73–86 lie on the Cytoplasmic side of the membrane; it reads YVELGTSIRLSGGD. Residues 87 to 107 traverse the membrane as a helical segment; that stretch reads FAYLCFMKWYPVAFAFMCIGC. Residues 108–145 are Extracellular-facing; sequence TINYPATLAVQAQTFAEYVFRGAGVELDETSEFWAKKL. Residues 146–166 form a helical membrane-spanning segment; that stretch reads LGFSLIILLMFMNFFSLKTFV. The Cytoplasmic segment spans residues 167 to 173; the sequence is QRFSILA. A helical membrane pass occupies residues 174–194; sequence SLAKIAATLLIIITGFYYLIF. Residues 195–214 are Extracellular-facing; that stretch reads KHWKQNLEEPFKGSNWNPGP. The helical transmembrane segment at 215-235 threads the bilayer; that stretch reads FVNALFAGLFSYDGWDILNFG. The Cytoplasmic segment spans residues 236–249; it reads AEEIENPKRTMPLS. A helical transmembrane segment spans residues 250–270; sequence IIIGMTCIGVIYVAVNVAYSI. Topologically, residues 271 to 290 are extracellular; it reads VLSPTEMIASNAVAIDFANK. N-linked (GlcNAc...) asparagine glycosylation occurs at Asn289. The helical transmembrane segment at 291–311 threads the bilayer; sequence TLGAAAFVVPVMVAILLIGSL. Residues 312 to 348 are Cytoplasmic-facing; sequence NSTMFSASRYLQAVSRQGHIPSAISGIAPNCDSPRVA. A helical transmembrane segment spans residues 349–369; that stretch reads LLVHILIAIAVSFLGDPDKLI. Residues 370-404 are Extracellular-facing; that stretch reads NYVAFAQWSQRAFTMSALLYLRIRGRPRHPDRIQL. A helical transmembrane segment spans residues 405–425; the sequence is PIIMPILFFLVCTSMVVISII. Over 426–429 the chain is Cytoplasmic; it reads DDFK. Residues 430–450 form a helical membrane-spanning segment; sequence SSAVGLGILLGGLIIFIIFVW. Residues 451-523 are Extracellular-facing; that stretch reads DRALPSSHTF…GNGQFKCTRM (73 aa). Asn462 is a glycosylation site (N-linked (GlcNAc...) asparagine). The PDZ-binding motif signature appears at 521-523; that stretch reads TRM.

It belongs to the amino acid-polyamine-organocation (APC) superfamily. As to quaternary structure, interacts (via PDZ-binding motif) with nfrl-1 (via PDZ 2 domain); the interaction with nrfl-1 is required to sequester aat-6 to the apical cell membrane of intestinal cells. In terms of tissue distribution, expressed at the apical cell membrane of intestinal cells.

It is found in the apical cell membrane. In terms of biological role, amino acid transporter that mediates the uptake of the L-enantiomers of various amino acids, including L-glutamate. May play a role in promoting fertility. In Caenorhabditis elegans, this protein is Amino acid transporter protein 6.